Consider the following 177-residue polypeptide: Interleukin-1 receptor antagonist protein (177 aa).

A signal peptide spans M1–C25. A disulfide bond links C91 and C141. An N-linked (GlcNAc...) asparagine glycan is attached at N109.

The protein belongs to the IL-1 family.

The protein localises to the secreted. Its function is as follows. Anti-inflammatory antagonist of interleukin-1 family of proinflammatory cytokines such as interleukin-1beta/IL1B and interleukin-1alpha/IL1A. Protects from immune dysregulation and uncontrolled systemic inflammation triggered by IL1 for a range of innate stimulatory agents such as pathogens. The protein is Interleukin-1 receptor antagonist protein (IL1RN) of Sus scrofa (Pig).